Consider the following 209-residue polypeptide: Thymidylate kinase (209 aa).

ATP is bound at residue 7 to 14; it reads GIDGAGKS.

This sequence belongs to the thymidylate kinase family.

The catalysed reaction is dTMP + ATP = dTDP + ADP. Its function is as follows. Phosphorylation of dTMP to form dTDP in both de novo and salvage pathways of dTTP synthesis. The sequence is that of Thymidylate kinase from Mycoplasma mobile (strain ATCC 43663 / 163K / NCTC 11711) (Mesomycoplasma mobile).